We begin with the raw amino-acid sequence, 647 residues long: Putative pre-mRNA-splicing factor ATP-dependent RNA helicase C20H4.09 (647 aa).

A Helicase ATP-binding domain is found at 35–199; the sequence is LYAVEQNQIT…FGQDKVCTMS (165 aa). 48–55 contacts ATP; the sequence is GHTGCGKT. Residues 146 to 149 carry the DEAH box motif; the sequence is DEVH. A Helicase C-terminal domain is found at 219–398; the sequence is YVDSAIETVI…PLVLFLKGLG (180 aa).

It belongs to the DEAD box helicase family. DEAH subfamily.

The protein localises to the nucleus. It carries out the reaction ATP + H2O = ADP + phosphate + H(+). Its function is as follows. Pre-mRNA processing factor involved in disassembly of spliceosomes after the release of mature mRNA. In Schizosaccharomyces pombe (strain 972 / ATCC 24843) (Fission yeast), this protein is Putative pre-mRNA-splicing factor ATP-dependent RNA helicase C20H4.09.